We begin with the raw amino-acid sequence, 841 residues long: Protein translocase subunit SecA (841 aa).

ATP is bound by residues Gln-85, 103-107 (GEGKT), and Asp-492. Positions 788-841 (EVVQGQTTAHQPQEGDEEKTVKKKPVRKVVDIGRNSPCHCGSGKKYKNCHGKTE) are disordered. Zn(2+) contacts are provided by Cys-825, Cys-827, Cys-836, and His-837. Positions 829–841 (SGKKYKNCHGKTE) are enriched in basic residues.

It belongs to the SecA family. As to quaternary structure, monomer and homodimer. Part of the essential Sec protein translocation apparatus which comprises SecA, SecYEG and auxiliary proteins SecDF. Other proteins may also be involved. Requires Zn(2+) as cofactor.

It localises to the cell membrane. The protein localises to the cytoplasm. The catalysed reaction is ATP + H2O + cellular proteinSide 1 = ADP + phosphate + cellular proteinSide 2.. Its function is as follows. Part of the Sec protein translocase complex. Interacts with the SecYEG preprotein conducting channel. Has a central role in coupling the hydrolysis of ATP to the transfer of proteins into and across the cell membrane, serving as an ATP-driven molecular motor driving the stepwise translocation of polypeptide chains across the membrane. The sequence is that of Protein translocase subunit SecA from Bacillus pumilus (strain SAFR-032).